The following is a 362-amino-acid chain: Adenosine deaminase (362 aa).

Zn(2+)-binding residues include H19 and H21. H21, D23, and G181 together coordinate substrate. Residue H208 participates in Zn(2+) binding. E211 acts as the Proton donor in catalysis. D300 is a Zn(2+) binding site.

This sequence belongs to the metallo-dependent hydrolases superfamily. Adenosine and AMP deaminases family. Adenosine deaminase subfamily. The cofactor is Zn(2+).

The catalysed reaction is adenosine + H2O + H(+) = inosine + NH4(+). It catalyses the reaction 2'-deoxyadenosine + H2O + H(+) = 2'-deoxyinosine + NH4(+). Its function is as follows. Catalyzes the hydrolytic deamination of adenosine and 2-deoxyadenosine. This Mycobacterium sp. (strain JLS) protein is Adenosine deaminase.